A 238-amino-acid chain; its full sequence is Auxin-responsive protein IAA2 (238 aa).

Positions 24–28 match the EAR-like (transcriptional repression) motif; that stretch reads LCLGL. Composition is skewed to low complexity over residues 33 to 44, 59 to 69, and 85 to 94; these read SSSSSSKPSEGS, ASKPSGAAAAA, and ASSSSSSSKQ. Disordered regions lie at residues 33-69 and 82-114; these read SSSSSSKPSEGSTAAPAFALRSNGTNASKPSGAAAAA and RNLASSSSSSSKQAPPPPSSSPQNGDKASKDGG. In terms of domain architecture, PB1 spans 118–216; it reads GMFVKINMDG…TAKRLRVLKS (99 aa). A disordered region spans residues 217–238; sequence SDLPPPSLMRAAGSRKRAAADS. The span at 229–238 shows a compositional bias: basic residues; that stretch reads GSRKRAAADS.

It belongs to the Aux/IAA family. As to quaternary structure, homodimers and heterodimers. As to expression, highly expressed in flowers.

It is found in the nucleus. Its function is as follows. Aux/IAA proteins are short-lived transcriptional factors that function as repressors of early auxin response genes at low auxin concentrations. The protein is Auxin-responsive protein IAA2 (IAA2) of Oryza sativa subsp. japonica (Rice).